The following is a 160-amino-acid chain: Transcription elongation factor GreA (160 aa).

Positions 49-73 (HAAKEEQSHNEGRIADLEDKLARAD) form a coiled coil.

The protein belongs to the GreA/GreB family.

In terms of biological role, necessary for efficient RNA polymerase transcription elongation past template-encoded arresting sites. The arresting sites in DNA have the property of trapping a certain fraction of elongating RNA polymerases that pass through, resulting in locked ternary complexes. Cleavage of the nascent transcript by cleavage factors such as GreA or GreB allows the resumption of elongation from the new 3'terminus. GreA releases sequences of 2 to 3 nucleotides. The sequence is that of Transcription elongation factor GreA from Rhodopseudomonas palustris (strain BisA53).